We begin with the raw amino-acid sequence, 151 residues long: Ribonuclease H (151 aa).

The RNase H type-1 domain maps to 1–141; the sequence is MKNVIIYTDG…ADALANRGID (141 aa). Positions 9, 47, 69, and 133 each coordinate Mg(2+).

Belongs to the RNase H family. In terms of assembly, monomer. Requires Mg(2+) as cofactor.

It is found in the cytoplasm. The catalysed reaction is Endonucleolytic cleavage to 5'-phosphomonoester.. Its function is as follows. Endonuclease that specifically degrades the RNA of RNA-DNA hybrids. This is Ribonuclease H from Alcanivorax borkumensis (strain ATCC 700651 / DSM 11573 / NCIMB 13689 / SK2).